Here is a 128-residue protein sequence, read N- to C-terminus: MIPVLLVTICLAVFPFQGSSIILESGNINDYEIVYPKKVNVLPTGAMNSAHPCCDPVTCQPKQGEHCISGPCCRNCKFLNSGTICKRARGDNLHDYCTGISSDCPRNPYKGKYDPMKWPAAAKGSVLM.

The first 20 residues, 1–20, serve as a signal peptide directing secretion; sequence MIPVLLVTICLAVFPFQGSS. Residues 21-47 constitute a propeptide that is removed on maturation; the sequence is IILESGNINDYEIVYPKKVNVLPTGAM. The Disintegrin domain occupies 26 to 112; it reads GNINDYEIVY…DCPRNPYKGK (87 aa). Intrachain disulfides connect C53–C76, C67–C73, C72–C97, and C85–C104. Positions 89-91 match the Cell attachment site motif; sequence RGD. The propeptide occupies 115-128; sequence PMKWPAAAKGSVLM.

The protein belongs to the disintegrin family. Dimeric disintegrin subfamily. Heterodimer with EO5B; disulfide-linked. In terms of tissue distribution, expressed by the venom gland.

The protein resides in the secreted. Functionally, poor inhibitor of platelet aggregation. The disintegrin inhibits the adhesion of cells expressing the RGD-dependent integrin alpha-5/beta-1 (ITGA5/ITGB1) to immobilized fibronectin. Inhibition on alpha-2b/beta-3 (ITGA2B/ITGB3) is low. This is Disintegrin EO4A from Echis ocellatus (Ocellated saw-scaled viper).